Here is a 357-residue protein sequence, read N- to C-terminus: Membrane-bound lytic murein transglycosylase C (357 aa).

An N-terminal signal peptide occupies residues 1 to 16 (MKKLLALFVIAPILIS). A lipid anchor (N-palmitoyl cysteine) is attached at Cys17. Cys17 is lipidated: S-diacylglycerol cysteine.

It belongs to the transglycosylase Slt family.

It localises to the cell outer membrane. The enzyme catalyses Exolytic cleavage of the (1-&gt;4)-beta-glycosidic linkage between N-acetylmuramic acid (MurNAc) and N-acetylglucosamine (GlcNAc) residues in peptidoglycan, from either the reducing or the non-reducing ends of the peptidoglycan chains, with concomitant formation of a 1,6-anhydrobond in the MurNAc residue.. Its function is as follows. Murein-degrading enzyme. May play a role in recycling of muropeptides during cell elongation and/or cell division. This Photorhabdus laumondii subsp. laumondii (strain DSM 15139 / CIP 105565 / TT01) (Photorhabdus luminescens subsp. laumondii) protein is Membrane-bound lytic murein transglycosylase C.